Consider the following 157-residue polypeptide: Mannose-specific lectin (157 aa).

A signal peptide (or 23; in 70% of the molecules) is located at residues 1–19 (MAKASLLILAAIFLGVITP). The Bulb-type lectin domain occupies 24-132 (DNILYSGETL…DRWATGTHTG (109 aa)). Alpha-D-mannopyranose is bound by residues glutamine 49, aspartate 51, asparagine 53, tyrosine 57, aspartate 60, lysine 61, tryptophan 64, alanine 65, asparagine 67, glutamine 80, aspartate 82, asparagine 84, tyrosine 88, isoleucine 95, tryptophan 96, asparagine 99, asparagine 106, glutamine 112, aspartate 114, asparagine 116, tyrosine 120, and tryptophan 125. A disulfide bridge connects residues cysteine 52 and cysteine 75. The propeptide at 129–157 (THTGLVGIPASPPSEKYPTAGKIKLVTAK) is removed in mature form.

As to quaternary structure, homotetramer.

The protein localises to the secreted. Mannose-specific lectin which binds alpha-D-linked mannose. Displays a high affinity for alpha-(1-3)-mannose oligomers. Displays antiviral activity and therefore may contribute to defense against infections. In Galanthus nivalis (Common snowdrop), this protein is Mannose-specific lectin.